The sequence spans 365 residues: MLKRTPLFHAYETFGAKTIDFGGWELPVQFSSIKEEHEAVRTKAGLFDVSHMGEVEIKGQDALPFLQRLLTNDVSKLTDGKALYTAMCYEDGGTVDDLLVYQKEKNDYLLVINASNIEKDVEWLLQHQGENDVLIQNVSDEIALLALQGPLAADIMKDVADEEVTSLKPFTFLSKAEVAQKEVLVSRTGYTGEDGFEIYCQSEDAVHIWSALLKVGAPKGLIPCGLGARDTLRFEARLPLYGQELTKDISPLEGGIGFAVKTDKEANFIGKEALKKQKEEGPKRKLVGIEMIDKGIPRTDYPVFSGEKQIGVVTTGTQSPTLKKNVGLALIESSQAQLGTVVEVQVRKKRLKAKIVATPFYKRAK.

This sequence belongs to the GcvT family. In terms of assembly, the glycine cleavage system is composed of four proteins: P, T, L and H.

It carries out the reaction N(6)-[(R)-S(8)-aminomethyldihydrolipoyl]-L-lysyl-[protein] + (6S)-5,6,7,8-tetrahydrofolate = N(6)-[(R)-dihydrolipoyl]-L-lysyl-[protein] + (6R)-5,10-methylene-5,6,7,8-tetrahydrofolate + NH4(+). Its function is as follows. The glycine cleavage system catalyzes the degradation of glycine. This Bacillus pumilus (strain SAFR-032) protein is Aminomethyltransferase.